The following is a 151-amino-acid chain: MYCPFCNAQDTKVIDSRLVSEGSQVRRRRSCNECNERFTTYEFAELLMPRLIKSDGRREPFNDDKLLVGINRALEKRPVSLEDIDAAVNKLKSTLRATGEREVTSKIVGELVMELLKGLDKIAYIRFASVYRSFKDVKEFGEEIAKLETDF.

A zinc finger spans residues 3–34; sequence CPFCNAQDTKVIDSRLVSEGSQVRRRRSCNEC. Residues 49 to 139 form the ATP-cone domain; sequence PRLIKSDGRR…VYRSFKDVKE (91 aa).

This sequence belongs to the NrdR family. The cofactor is Zn(2+).

Negatively regulates transcription of bacterial ribonucleotide reductase nrd genes and operons by binding to NrdR-boxes. The sequence is that of Transcriptional repressor NrdR from Psychromonas ingrahamii (strain DSM 17664 / CCUG 51855 / 37).